Reading from the N-terminus, the 229-residue chain is Uracil-DNA glycosylase (229 aa).

Asp-64 acts as the Proton acceptor in catalysis.

It belongs to the uracil-DNA glycosylase (UDG) superfamily. UNG family.

The protein resides in the cytoplasm. The enzyme catalyses Hydrolyzes single-stranded DNA or mismatched double-stranded DNA and polynucleotides, releasing free uracil.. Excises uracil residues from the DNA which can arise as a result of misincorporation of dUMP residues by DNA polymerase or due to deamination of cytosine. The chain is Uracil-DNA glycosylase from Klebsiella pneumoniae subsp. pneumoniae (strain ATCC 700721 / MGH 78578).